The chain runs to 476 residues: Glycogen synthase (476 aa).

K15 is an ADP-alpha-D-glucose binding site.

This sequence belongs to the glycosyltransferase 1 family. Bacterial/plant glycogen synthase subfamily.

The enzyme catalyses [(1-&gt;4)-alpha-D-glucosyl](n) + ADP-alpha-D-glucose = [(1-&gt;4)-alpha-D-glucosyl](n+1) + ADP + H(+). It functions in the pathway glycan biosynthesis; glycogen biosynthesis. In terms of biological role, synthesizes alpha-1,4-glucan chains using ADP-glucose. The sequence is that of Glycogen synthase from Actinobacillus succinogenes (strain ATCC 55618 / DSM 22257 / CCUG 43843 / 130Z).